The following is a 519-amino-acid chain: cAMP-dependent protein kinase catalytic subunit (519 aa).

Residues 1–195 (MLPDTGILSP…SQTLQKAENA (195 aa)) are disordered. Composition is skewed to polar residues over residues 10–25 (PFTT…SQTL), 116–159 (VTPS…TSPI), and 173–191 (TPVN…TLQK). One can recognise a Protein kinase domain in the interval 208 to 463 (FNFQRTLGTG…SRSVLEHPWF (256 aa)). Residues 214-222 (LGTGSFGRV) and K237 contribute to the ATP site. The active-site Proton acceptor is the D331. In terms of domain architecture, AGC-kinase C-terminal spans 464–519 (AEVNWERLLSKQIEPPYVPPVRGGIGDASLFDKYPEETEEYGKDGPDQYGHFFTDF).

It belongs to the protein kinase superfamily. Ser/Thr protein kinase family.

The enzyme catalyses L-seryl-[protein] + ATP = O-phospho-L-seryl-[protein] + ADP + H(+). It carries out the reaction L-threonyl-[protein] + ATP = O-phospho-L-threonyl-[protein] + ADP + H(+). Activated by cAMP. Its function is as follows. Functions downstream of adenylate cyclase to regulate trap-development for nematode capture. This chain is cAMP-dependent protein kinase catalytic subunit, found in Arthrobotrys oligospora (strain ATCC 24927 / CBS 115.81 / DSM 1491) (Nematode-trapping fungus).